The primary structure comprises 814 residues: Syn-copalyl diphosphate synthase TPS3, chloroplastic (814 aa).

The transit peptide at 1 to 52 directs the protein to the chloroplast; sequence MCSLSTLSPNFSNAYGSKSVSSTASRFPCWQRSNETWKTQSREVIHWTYVVR. Lys248 serves as a coordination point for substrate. Mg(2+) is bound by residues Asp386 and Asp388. A DXDD motif motif is present at residues 386–389; the sequence is DIDD. Lys472 is a substrate binding site.

This sequence belongs to the terpene synthase family. Mg(2+) serves as cofactor. Mostly expressed in trichomes of leaves and fruits.

The protein localises to the plastid. It localises to the chloroplast. The catalysed reaction is (2E,6E,10E)-geranylgeranyl diphosphate = 9alpha-copalyl diphosphate. Its pathway is secondary metabolite biosynthesis; terpenoid biosynthesis. Involved in the biosynthesis of labdane-type diterpenoid including cleroda-dienols, and peregrinol lactones and furan derivatives, dopaminergic diterpenoids that can bind to dopamine receptors in the human pituitary gland, have probably ability to lower prolactin levels, and are used to treat menstrual cycle disorders (e.g. premenstrual syndrome and mastodynia). Terpene synthase that produces syn-copalyl diphosophate from geranylgeranyl diphosphate (GGPP). In Vitex agnus-castus (Chaste tree), this protein is Syn-copalyl diphosphate synthase TPS3, chloroplastic.